A 199-amino-acid chain; its full sequence is Patulin biosynthesis cluster protein F (199 aa).

A signal peptide spans 1 to 21 (MKSSLWVSLAVSLIGLGPAAA). N-linked (GlcNAc...) asparagine glycosylation is found at Asn129 and Asn183.

This sequence belongs to the patF family.

The protein localises to the cytoplasm. It is found in the cytosol. It catalyses the reaction phyllostine = neopatulin. Its pathway is mycotoxin biosynthesis; patulin biosynthesis. Part of the gene cluster that mediates the biosynthesis of patulin, an acetate-derived tetraketide mycotoxin produced by several fungal species that shows antimicrobial properties against several bacteria. PatF catalyzes the conversion of phyllostine into neopatulin. The pathway begins with the synthesis of 6-methylsalicylic acid by the polyketide synthase (PKS) patK via condensation of acetate and malonate units. The 6-methylsalicylic acid decarboxylase patG then catalyzes the decarboxylation of 6-methylsalicylic acid to yield m-cresol (also known as 3-methylphenol). These first reactions occur in the cytosol. The intermediate m-cresol is then transported into the endoplasmic reticulum where the cytochrome P450 monooxygenase patH converts it to m-hydroxybenzyl alcohol, which is further converted to gentisyl alcohol by the cytochrome P450 monooxygenase patI. The oxidoreductases patJ and patO further convert gentisyl alcohol to isoepoxydon in the vacuole. PatN catalyzes then the transformation of isoepoxydon into phyllostine. The cluster protein patF is responsible for the conversion from phyllostine to neopatulin whereas the alcohol dehydrogenase patD converts neopatulin to E-ascladiol. The steps between isoepoxydon and E-ascladiol occur in the cytosol, and E-ascladiol is probably secreted to the extracellular space by one of the cluster-specific transporters patC or patM. Finally, the secreted patulin synthase patE catalyzes the conversion of E-ascladiol to patulin. The polypeptide is Patulin biosynthesis cluster protein F (Penicillium expansum (Blue mold rot fungus)).